A 22-amino-acid polypeptide reads, in one-letter code: Cysteine protease inhibitor 4 (22 aa).

This sequence belongs to the protease inhibitor I3 (leguminous Kunitz-type inhibitor) family. As to expression, tubers.

Its subcellular location is the vacuole. In terms of biological role, inhibitor of papain (cysteine protease). Does not inhibit trypsin, chymotrypsin nor elastase (serine proteases). May protect the plant by inhibiting proteases of invading organisms. The polypeptide is Cysteine protease inhibitor 4 (Solanum tuberosum (Potato)).